The primary structure comprises 452 residues: MDSLIRTFSNAQSSRDGYQLAQTLSPDLPQQQLQAIWKSCGHHDAQNVIKRGIQNSTSGFEKLPKDEVQGWSDVYLAYWKAIGELLPALNQAPQSSWTKVYDAWKELLSALYRGYIGQGFEAWSIPCLYVVAKNLRFFALKADEERNNNVAAGDTSGQIFQDDFDPESEQNQKLEDCARQLNRIFTLCLNDRAPLEESRKWGIYYIINLLFKTYFKLNSASLSKNILKTLSAYRGDMPPLSAFPKSQQVTFKYYEGVLCFLEENYFQAEEHLTQAWSLCHKDAMKNKELILTYLVPCHLLTTHTLPSQKLLEPYPRLQKLFLPLSNCIKKGELHAFDLALQQGEDEFVKRRIYLTLERGRDIALRNLLRKVFIAGGFEESKVEGGPRVRRTRIPVAEFAAAISLGSKQMLETDEIECLMANMIYKNLMKGYIARERGFVVLSKSGAFPGTGV.

The region spanning 249–446 (VTFKYYEGVL…GFVVLSKSGA (198 aa)) is the PCI domain.

This sequence belongs to the CSN12 family.

The polypeptide is Protein CSN12 homolog (csn-8) (Neurospora crassa (strain ATCC 24698 / 74-OR23-1A / CBS 708.71 / DSM 1257 / FGSC 987)).